A 113-amino-acid chain; its full sequence is uncharacterized protein (113 aa).

Residues 16-113 (TPFGYTLSLI…CEWGVKNQNN (98 aa)) form the HTH hxlR-type domain.

This is an uncharacterized protein from Halalkalibacterium halodurans (strain ATCC BAA-125 / DSM 18197 / FERM 7344 / JCM 9153 / C-125) (Bacillus halodurans).